The primary structure comprises 258 residues: MILDEIISKTKINLENIKENLPLCRLENALTNSYIPRDVKQVLKQKNSINIIAEIKKASPSKGVIKEDFDPLKIAFEYEKAGVSAFSILTEPFYFQGSLEYIALVRRYTNTPILRKDFIVDIYQIAEARLYGADFILLIAKALDKFYLKTLFEYAKSLNLEVLMEIHDETDLEKALFVDADIIGINHRNLQTFDMDMELCIKLIPLIPSGKIIVAESGLYNNSELINLKKQGADAFLIGEHFMRQESIYNAVKDMKGE.

It belongs to the TrpC family.

The enzyme catalyses 1-(2-carboxyphenylamino)-1-deoxy-D-ribulose 5-phosphate + H(+) = (1S,2R)-1-C-(indol-3-yl)glycerol 3-phosphate + CO2 + H2O. The protein operates within amino-acid biosynthesis; L-tryptophan biosynthesis; L-tryptophan from chorismate: step 4/5. The chain is Indole-3-glycerol phosphate synthase from Campylobacter fetus subsp. fetus (strain 82-40).